Here is a 505-residue protein sequence, read N- to C-terminus: AMP phosphorylase (505 aa).

AMP-binding positions include Gly170, 196 to 201 (SRAITS), and Thr205. The active-site Proton donor is Asp258. Positions 266 and 290 each coordinate AMP.

It belongs to the thymidine/pyrimidine-nucleoside phosphorylase family. Type 2 subfamily.

It carries out the reaction AMP + phosphate = alpha-D-ribose 1,5-bisphosphate + adenine. The enzyme catalyses CMP + phosphate = cytosine + alpha-D-ribose 1,5-bisphosphate. It catalyses the reaction UMP + phosphate = alpha-D-ribose 1,5-bisphosphate + uracil. Functionally, catalyzes the conversion of AMP and phosphate to adenine and ribose 1,5-bisphosphate (R15P). Exhibits phosphorylase activity toward CMP and UMP in addition to AMP. Functions in an archaeal AMP degradation pathway, together with R15P isomerase and RubisCO. The protein is AMP phosphorylase of Methanococcus maripaludis (strain C7 / ATCC BAA-1331).